The primary structure comprises 201 residues: Peptide deformylase 2 (201 aa).

Fe cation contacts are provided by Cys-121 and His-163. Glu-164 is a catalytic residue. His-167 contacts Fe cation.

The protein belongs to the polypeptide deformylase family. Requires Fe(2+) as cofactor.

It carries out the reaction N-terminal N-formyl-L-methionyl-[peptide] + H2O = N-terminal L-methionyl-[peptide] + formate. In terms of biological role, removes the formyl group from the N-terminal Met of newly synthesized proteins. Requires at least a dipeptide for an efficient rate of reaction. N-terminal L-methionine is a prerequisite for activity but the enzyme has broad specificity at other positions. This is Peptide deformylase 2 from Prochlorococcus marinus (strain MIT 9313).